The chain runs to 326 residues: Putative cell agglutination protein pfl9 (326 aa).

A signal peptide spans 1–21 (MNVVKYIIFSFALAPLLLVNA). Asparagine 25 is a glycosylation site (N-linked (GlcNAc...) asparagine). Tandem repeats lie at residues 103-137 (STIT…IPTA) and 138-175 (GTFT…TPSC). Positions 103-175 (STITTTITSG…GEVEVITPSC (73 aa)) are 2 X 36 AA approximate tandem repeats. In terms of domain architecture, DIPSY spans 164–326 (QSGEVEVITP…RANDVTLQLY (163 aa)).

Belongs to the mam3/map4 family.

It is found in the cell surface. In terms of biological role, may be involved in agglutination during conjugation or other aspects of colony formation. Induces flocculation when overexpressed. The chain is Putative cell agglutination protein pfl9 from Schizosaccharomyces pombe (strain 972 / ATCC 24843) (Fission yeast).